Reading from the N-terminus, the 177-residue chain is MPTALCSIALALLVALHEGKSQAATTPIPEQPAPLPRARGSHLRTRRCSCSSWLDKECVYFCHLDIIWVNTPGQTAPYGLGNPPRRRRRSLPRRCECYSARDPACATFCHQRPWTDAVAVPGSGSPAAAFQDGKTQATAGELLQRLRVISATKIHFARQQQKPTRETRPTHSRQRKR.

Positions 1 to 23 (MPTALCSIALALLVALHEGKSQA) are cleaved as a signal peptide. Positions 24 to 45 (ATTPIPEQPAPLPRARGSHLRT) are excised as a propeptide. Disulfide bonds link cysteine 48–cysteine 62 and cysteine 50–cysteine 58. Positions 69–177 (VNTPGQTAPY…RPTHSRQRKR (109 aa)) are excised as a propeptide. The interval 95 to 110 (CECYSARDPACATFCH) is endothelin-like. Positions 155–177 (HFARQQQKPTRETRPTHSRQRKR) are disordered.

Belongs to the endothelin/sarafotoxin family. As to expression, expressed in various organs including heart, lung, liver, kidney, gastrointestinal tract, uterus and ovary, but not in spleen. Within the gastrointestinal tract, gene expression was detected in rumen, a ruminant-specific digestive organ, as well as stomach, duodenum and colon.

The protein localises to the secreted. Functionally, endothelins are endothelium-derived vasoconstrictor peptides. In Bos taurus (Bovine), this protein is Endothelin-2 (EDN2).